The primary structure comprises 573 residues: Arylsulfatase I (573 aa).

A signal peptide spans 1 to 23 (MHALTGLSLVSLLSFGYLSWDWA). Ca(2+)-binding residues include Asp56, Asp57, and Cys94. Cys94 acts as the Nucleophile in catalysis. Cys94 carries the 3-oxoalanine (Cys) modification. Lys148 provides a ligand contact to substrate. His150 is an active-site residue. Substrate is bound at residue His240. Residues Asn277 and Asn289 are each glycosylated (N-linked (GlcNAc...) asparagine). The Ca(2+) site is built by Asp298 and Asn299. Lys316 serves as a coordination point for substrate. N-linked (GlcNAc...) asparagine glycans are attached at residues Asn467 and Asn497. Residues 516-550 (FNGGAWGPWASDEEEEEEEEEAGRARSFSRGRRKK) are disordered. A compositionally biased stretch (acidic residues) spans 526 to 536 (SDEEEEEEEEE).

The protein belongs to the sulfatase family. The cofactor is Ca(2+). In terms of processing, the oxidation of Cys-94 residue to 3-oxoalanine (also known as C(alpha)-formylglycine) by SUMF1/Sulfatase-modifying factor 1, seems critical for catalytic activity.

Its subcellular location is the secreted. It is found in the endoplasmic reticulum. Displays arylsulfatase activity at neutral pH, when co-expressed with SUMF1; arylsulfatase activity is measured in the secretion medium of retinal cell line, but no activity is recorded when measured in cell extracts. This chain is Arylsulfatase I (ARSI), found in Canis lupus familiaris (Dog).